Reading from the N-terminus, the 157-residue chain is Protein Smg (157 aa).

The protein belongs to the Smg family.

This chain is Protein Smg, found in Escherichia coli O8 (strain IAI1).